The sequence spans 100 residues: Apolipoprotein C-II (100 aa).

The N-terminal stretch at 1 to 22 is a signal peptide; the sequence is MGTRFLLALFLVLLVLGFEVQG. Residues 66–74 are lipid binding; sequence TVDEKLRDM. The tract at residues 78–100 is lipoprotein lipase cofactor; sequence STAAVSTYAGIFTDQLLTLLKGD.

Belongs to the apolipoprotein C2 family. Post-translationally, proapolipoprotein C-II is synthesized as a sialic acid containing glycoprotein which is subsequently desialylated prior to its proteolytic processing. Proapolipoprotein C-II, the major form found in plasma undergoes proteolytic cleavage of its N-terminal hexapeptide to generate apolipoprotein C-II, which occurs as the minor form in plasma.

It is found in the secreted. Functionally, component of chylomicrons, very low-density lipoproteins (VLDL), low-density lipoproteins (LDL), and high-density lipoproteins (HDL) in plasma. Plays an important role in lipoprotein metabolism as an activator of lipoprotein lipase. Both proapolipoprotein C-II and apolipoprotein C-II can activate lipoprotein lipase. In Otolemur garnettii (Small-eared galago), this protein is Apolipoprotein C-II (APOC2).